The sequence spans 161 residues: Transcription elongation factor GreB (161 aa).

Belongs to the GreA/GreB family. GreB subfamily.

Necessary for efficient RNA polymerase transcription elongation past template-encoded arresting sites. The arresting sites in DNA have the property of trapping a certain fraction of elongating RNA polymerases that pass through, resulting in locked ternary complexes. Cleavage of the nascent transcript by cleavage factors such as GreA or GreB allows the resumption of elongation from the new 3'terminus. GreB releases sequences of up to 9 nucleotides in length. The polypeptide is Transcription elongation factor GreB (Vibrio cholerae serotype O1 (strain ATCC 39315 / El Tor Inaba N16961)).